A 229-amino-acid polypeptide reads, in one-letter code: Prolactin (229 aa).

The signal sequence occupies residues 1–30; sequence MDSKGSAQKGSRLLLLLVVSNLLLCQGVVS. Residues Cys-34 and Cys-41 are joined by a disulfide bond. Residues Ser-56, Ser-64, and Ser-120 each carry the phosphoserine modification. 2 disulfides stabilise this stretch: Cys-88-Cys-204 and Cys-221-Cys-229.

Belongs to the somatotropin/prolactin family. Interacts with PRLR.

The protein localises to the secreted. Its function is as follows. Prolactin acts primarily on the mammary gland by promoting lactation. This is Prolactin (PRL) from Capra hircus (Goat).